A 307-amino-acid polypeptide reads, in one-letter code: 4-diphosphocytidyl-2-C-methyl-D-erythritol kinase (307 aa).

Residue Lys-9 is part of the active site. 94-104 lines the ATP pocket; the sequence is PIGAGLAGGSS. Asp-136 is a catalytic residue.

This sequence belongs to the GHMP kinase family. IspE subfamily.

It catalyses the reaction 4-CDP-2-C-methyl-D-erythritol + ATP = 4-CDP-2-C-methyl-D-erythritol 2-phosphate + ADP + H(+). The protein operates within isoprenoid biosynthesis; isopentenyl diphosphate biosynthesis via DXP pathway; isopentenyl diphosphate from 1-deoxy-D-xylulose 5-phosphate: step 3/6. Catalyzes the phosphorylation of the position 2 hydroxy group of 4-diphosphocytidyl-2C-methyl-D-erythritol. The polypeptide is 4-diphosphocytidyl-2-C-methyl-D-erythritol kinase (Synechococcus sp. (strain CC9605)).